Consider the following 404-residue polypeptide: Protrudin (404 aa).

Residues 1–20 are disordered; the sequence is MQTSEREGCGPEVSPSTVPE. Over 1-66 the chain is Cytoplasmic; sequence MQTSEREGCG…AGDGVRYLLR (66 aa). The segment at 1–92 is sufficient for homooligomerization; sequence MQTSEREGCG…LFLTLNEGAW (92 aa). The tract at residues 1–205 is sufficient for localization to endoplasmic reticulum tubular network and for interactions with REEP1, REEP5, ATL1, ATL2, ATL3 and SPAST; sequence MQTSEREGCG…LYLLPLCWVL (205 aa). Residues 51-64 form a necessary for interaction with RAB11A and function in neurite outgrowth region; sequence LEPLKDAGDGVRYL. The chain crosses the membrane as a helical span at residues 67 to 87; the sequence is WQTPLCSLLTCLGLNVLFLTL. Residue Asn88 is a topological domain, lumenal. A helical transmembrane segment spans residues 89 to 109; it reads EGAWYSVGALMISVPALLGYL. The Cytoplasmic segment spans residues 110 to 187; sequence QEGCQARLSE…NPAVSSQFYG (78 aa). The segment at residues 188 to 208 is an intramembrane region (helical); sequence ALLGTVCMLYLLPLCWVLALL. At 209 to 404 the chain is on the cytoplasmic side; that stretch reads NSTLFLGNVE…CASCNQTLSK (196 aa). The tract at residues 234-286 is disordered; sequence MNPKQEESAFESPPPSDAGGKGALVDCTPAPTPTEDLTPGSVEEAEEAEPDEE. The segment at 271-354 is necessary for interaction with KIF5A; it reads TPGSVEEAEE…GCSATFSVLK (84 aa). Over residues 276 to 286 the composition is skewed to acidic residues; it reads EEAEEAEPDEE. The tract at residues 286–292 is necessary for interaction with VAPA; that stretch reads EFKDAIE. The FYVE-type zinc-finger motif lies at 337–403; that stretch reads TNNYGSCTGC…VCASCNQTLS (67 aa). Residues Cys343, Cys346, Cys359, Cys362, Cys367, Cys370, Cys395, and Cys398 each coordinate Zn(2+).

Can form homooligomers (monomers, dimers and tetramers). Interacts with RAB11A (GDP-bound form); regulates RAB11A. Interacts with FKBP8; may negatively regulate ZFYVE27 phosphorylation. Interacts with VAPA (via MSP domain); may regulate ZFYVE27 retention in the endoplasmic reticulum and its function in cell projections formation. Interacts with VAPB (via MSP domain). Interacts with RAB11B (GDP-bound form), REEP1, REEP5, ATL1, ATL2, ATL3, SPAST, SURF4, KIF5A, KIF5B, KIF5C and RTN3. Post-translationally, phosphorylated. Phosphorylation is induced by NGF through the MAPK/ERK pathway and modulates interaction with RAB11A.

It localises to the recycling endosome membrane. It is found in the endoplasmic reticulum membrane. The protein resides in the cell projection. The protein localises to the growth cone membrane. In terms of biological role, key regulator of RAB11-dependent vesicular trafficking during neurite extension through polarized membrane transport. Promotes axonal elongation and contributes to the establishment of neuronal cell polarity. Involved in nerve growth factor-induced neurite formation in VAPA-dependent manner. Contributes to both the formation and stabilization of the tubular ER network. Involved in ER morphogenesis by regulating the sheet-to-tubule balance and possibly the density of tubule interconnections. Acts as an adapter protein that facilitates the interaction of KIF5A with VAPA, VAPB, SURF4, RAB11A, RAB11B and RTN3 and the ZFYVE27-KIF5A complex contributes to the transport of these proteins in neurons. Can induce formation of neurite-like membrane protrusions in non-neuronal cells in a KIF5A/B-dependent manner. The polypeptide is Protrudin (ZFYVE27) (Bos taurus (Bovine)).